A 99-amino-acid polypeptide reads, in one-letter code: uncharacterized protein (99 aa).

This is an uncharacterized protein from Caenorhabditis elegans.